The primary structure comprises 282 residues: Acetyl-coenzyme A carboxylase carboxyl transferase subunit beta (282 aa).

The 258-residue stretch at 25–282 folds into the CoA carboxyltransferase N-terminal domain; sequence LWTKCVSCGE…SSILTMLYRP (258 aa). Positions 29, 32, 48, and 51 each coordinate Zn(2+). Residues 29 to 51 form a C4-type zinc finger; sequence CVSCGETIYTKDIENNLNVCPKC.

This sequence belongs to the AccD/PCCB family. Acetyl-CoA carboxylase is a heterohexamer composed of biotin carboxyl carrier protein (AccB), biotin carboxylase (AccC) and two subunits each of ACCase subunit alpha (AccA) and ACCase subunit beta (AccD). The cofactor is Zn(2+).

It localises to the cytoplasm. The enzyme catalyses N(6)-carboxybiotinyl-L-lysyl-[protein] + acetyl-CoA = N(6)-biotinyl-L-lysyl-[protein] + malonyl-CoA. It functions in the pathway lipid metabolism; malonyl-CoA biosynthesis; malonyl-CoA from acetyl-CoA: step 1/1. In terms of biological role, component of the acetyl coenzyme A carboxylase (ACC) complex. Biotin carboxylase (BC) catalyzes the carboxylation of biotin on its carrier protein (BCCP) and then the CO(2) group is transferred by the transcarboxylase to acetyl-CoA to form malonyl-CoA. This Citrifermentans bemidjiense (strain ATCC BAA-1014 / DSM 16622 / JCM 12645 / Bem) (Geobacter bemidjiensis) protein is Acetyl-coenzyme A carboxylase carboxyl transferase subunit beta.